Consider the following 131-residue polypeptide: MSWQTYVDERLMCEIEGNHLTAAAIIGQDGSVWAQSSNFPQFKSEEITAIMSDFDEPGTLAPTGLHLGGTKYMVIQGEAGAVIRGKKGPGGVTVRKTNQALIIGIYDEPMTPGQCNMIVERLGDYLLEQGM.

It belongs to the profilin family. As to quaternary structure, occurs in many kinds of cells as a complex with monomeric actin in a 1:1 ratio.

The protein localises to the cytoplasm. It localises to the cytoskeleton. Its function is as follows. Binds to actin and affects the structure of the cytoskeleton. At high concentrations, profilin prevents the polymerization of actin, whereas it enhances it at low concentrations. By binding to PIP2, it inhibits the formation of IP3 and DG. This chain is Profilin-1, found in Hevea brasiliensis (Para rubber tree).